The sequence spans 312 residues: Olfactory receptor 2H2 (312 aa).

Over 1–23 the chain is Extracellular; that stretch reads MVNQSSTPGFLLLGFSEHPGLER. The N-linked (GlcNAc...) asparagine glycan is linked to Asn-3. A helical transmembrane segment spans residues 24 to 47; the sequence is TLFVVVLTSYLLTLVGNTLIILLS. At 48–55 the chain is on the cytoplasmic side; it reads ALDPKLHS. A helical membrane pass occupies residues 56–77; it reads PMYFFLSNLSFLDLCFTTSCVP. The Extracellular segment spans residues 78–98; the sequence is QMLVNLWGPKKTISFLDCSVQ. Cys-95 and Cys-187 are oxidised to a cystine. The helical transmembrane segment at 99–118 threads the bilayer; it reads IFIFLSLGTTECILLTVMAF. Residues 119–137 lie on the Cytoplasmic side of the membrane; it reads DRYVAVCQPLHYATIIHPR. The helical transmembrane segment at 138-156 threads the bilayer; the sequence is LCWQLASVAWVIGLVESVV. Topologically, residues 157–193 are extracellular; the sequence is QTPSTLHLPFCPDRQVDDFVCEVPALIRLSCEDTSYN. A helical transmembrane segment spans residues 194 to 217; sequence EIQVAVASVFILVVPLSLILVSYG. Residues 218–234 are Cytoplasmic-facing; the sequence is AITWAVLRINSAKGRRK. The helical transmembrane segment at 235-257 threads the bilayer; the sequence is AFGTCSSHLTVVTLFYSSVIAVY. Residues 258–270 are Extracellular-facing; the sequence is LQPKNPYAQERGK. A helical transmembrane segment spans residues 271–290; it reads FFGLFYAVGTPSLNPLIYTL. Topologically, residues 291 to 312 are cytoplasmic; sequence RNKEVTRAFRRLLGKEMGLTQS.

Belongs to the G-protein coupled receptor 1 family.

The protein resides in the cell membrane. Its function is as follows. Odorant receptor. The polypeptide is Olfactory receptor 2H2 (OR2H2) (Homo sapiens (Human)).